Consider the following 120-residue polypeptide: NADH-quinone oxidoreductase subunit A (120 aa).

3 helical membrane passes run 10–30 (ILVF…MGWF), 65–85 (VAIL…WAVV), and 89–109 (IGWF…VGFI).

The protein belongs to the complex I subunit 3 family. NDH-1 is composed of 14 different subunits. Subunits NuoA, H, J, K, L, M, N constitute the membrane sector of the complex.

It is found in the cell inner membrane. It carries out the reaction a quinone + NADH + 5 H(+)(in) = a quinol + NAD(+) + 4 H(+)(out). In terms of biological role, NDH-1 shuttles electrons from NADH, via FMN and iron-sulfur (Fe-S) centers, to quinones in the respiratory chain. The immediate electron acceptor for the enzyme in this species is believed to be ubiquinone. Couples the redox reaction to proton translocation (for every two electrons transferred, four hydrogen ions are translocated across the cytoplasmic membrane), and thus conserves the redox energy in a proton gradient. The chain is NADH-quinone oxidoreductase subunit A from Coxiella burnetii (strain Dugway 5J108-111).